Consider the following 277-residue polypeptide: MAKPTSRNDRFALFFITLIFLILTVSKPVASQNCGCASDFCCSKYGYCGTTDEFCGEGCQAGPCRSSGGGGDPAVSLEGTVTPDFFNSILNQRGDCPGKGFYTHDTFMAAANSYPSFGASISKREIAAFFAHVAQETGFMCYIEEIDGPAKAASGEYCDTEKPEFPCAQGKGYYGRGAIQLSWNYNYGLCGKALDENLLASPEKVAQDQVLAFKTAFWFWTTNVRTSFKSGFGATIRAVNSRECSGGDSTAKAANRIKYFQDYCGKLGVAPGDNLTC.

Residues 1-31 (MAKPTSRNDRFALFFITLIFLILTVSKPVAS) form the signal peptide. The Chitin-binding type-1 domain occupies 32–66 (QNCGCASDFCCSKYGYCGTTDEFCGEGCQAGPCRS). 4 disulfide bridges follow: Cys34–Cys42, Cys36–Cys48, Cys41–Cys55, and Cys59–Cys64. Positions 75–277 (VSLEGTVTPD…GVAPGDNLTC (203 aa)) are catalytic. Glu136 serves as the catalytic Proton donor. An N-linked (GlcNAc...) asparagine glycan is attached at Asn274.

This sequence belongs to the glycosyl hydrolase 19 family. Chitinase class I subfamily.

The catalysed reaction is Random endo-hydrolysis of N-acetyl-beta-D-glucosaminide (1-&gt;4)-beta-linkages in chitin and chitodextrins.. The protein is Endochitinase CHI of Arabidopsis thaliana (Mouse-ear cress).